The primary structure comprises 289 residues: NAD kinase (289 aa).

Asp82 serves as the catalytic Proton acceptor. NAD(+) is bound by residues 82–83 (DG), Arg87, 150–151 (NE), Lys161, Arg178, Asp180, 191–196 (TAYAMS), Ala215, and Gln250.

This sequence belongs to the NAD kinase family. A divalent metal cation is required as a cofactor.

The protein localises to the cytoplasm. It carries out the reaction NAD(+) + ATP = ADP + NADP(+) + H(+). Functionally, involved in the regulation of the intracellular balance of NAD and NADP, and is a key enzyme in the biosynthesis of NADP. Catalyzes specifically the phosphorylation on 2'-hydroxyl of the adenosine moiety of NAD to yield NADP. The sequence is that of NAD kinase from Methanosarcina mazei (strain ATCC BAA-159 / DSM 3647 / Goe1 / Go1 / JCM 11833 / OCM 88) (Methanosarcina frisia).